A 233-amino-acid chain; its full sequence is Octanoyltransferase (233 aa).

The BPL/LPL catalytic domain occupies 38–218; sequence AGGPDTLLLL…LVCDALDGVL (181 aa). Positions 57–66 are enriched in basic and acidic residues; that stretch reads RRTEPHERPL. Residues 57–77 are disordered; it reads RRTEPHERPLDGTPVVDTDRG. Substrate-binding positions include 76 to 83, 148 to 150, and 161 to 163; these read RGGKITWH, AIG, and GFA. Cysteine 179 acts as the Acyl-thioester intermediate in catalysis.

This sequence belongs to the LipB family.

It localises to the cytoplasm. The catalysed reaction is octanoyl-[ACP] + L-lysyl-[protein] = N(6)-octanoyl-L-lysyl-[protein] + holo-[ACP] + H(+). It participates in protein modification; protein lipoylation via endogenous pathway; protein N(6)-(lipoyl)lysine from octanoyl-[acyl-carrier-protein]: step 1/2. Its function is as follows. Catalyzes the transfer of endogenously produced octanoic acid from octanoyl-acyl-carrier-protein onto the lipoyl domains of lipoate-dependent enzymes. Lipoyl-ACP can also act as a substrate although octanoyl-ACP is likely to be the physiological substrate. The polypeptide is Octanoyltransferase (Mycobacterium avium (strain 104)).